We begin with the raw amino-acid sequence, 396 residues long: N-acyl-phosphatidylethanolamine-hydrolyzing phospholipase D (396 aa).

At methionine 1 the chain carries N-acetylmethionine. 2 stretches are compositionally biased toward polar residues: residues 1-12 (MDENENSQSPAP) and 26-37 (NSVQNSGGSESS). The tract at residues 1-41 (MDENENSQSPAPSHQYPKETLRKRQNSVQNSGGSESSRLSR) is disordered. Zn(2+) is bound by residues histidine 185 and histidine 187. Tyrosine 188 is an an N-acyl-1,2-diacyl-sn-glycero-3-phosphoethanolamine binding site. 3 residues coordinate Zn(2+): aspartate 189, histidine 190, and histidine 253. Lysine 256 is a binding site for deoxycholate. Aspartate 284 lines the Zn(2+) pocket. Histidine 321 contacts an N-acyl-1,2-diacyl-sn-glycero-3-phosphoethanolamine. Histidine 343 lines the Zn(2+) pocket. Residue alanine 348 coordinates deoxycholate.

This sequence belongs to the NAPE-PLD family. As to quaternary structure, homodimer. Bile acids promote the assembly of inactive monomers into an active dimer and enable catalysis. Requires Zn(2+) as cofactor. In terms of tissue distribution, widely expressed. Highest expression in brain, kidney and testis (at protein level). Expressed in adipose tissue (at protein level).

It is found in the golgi apparatus membrane. It localises to the early endosome membrane. The protein resides in the nucleus envelope. The protein localises to the nucleus. Its subcellular location is the nucleoplasm. The enzyme catalyses an N-acyl-1,2-diacyl-sn-glycero-3-phosphoethanolamine + H2O = an N-acylethanolamine + a 1,2-diacyl-sn-glycero-3-phosphate + H(+). It catalyses the reaction N-butanoyl-1-hexadecanoyl-2-(9Z,12Z-octadecadienoyl)-sn-glycero-3-phosphoethanolamine + H2O = N-butanoyl ethanolamine + 1-hexadecanoyl-2-(9Z,12Z-octadecadienoyl)-sn-glycero-3-phosphate + H(+). The catalysed reaction is N-hexanoyl-1-hexadecanoyl-2-(9Z,12Z-octadecadienoyl)-sn-glycero-3-phosphoethanolamine + H2O = N-hexanoyl ethanolamine + 1-hexadecanoyl-2-(9Z,12Z-octadecadienoyl)-sn-glycero-3-phosphate + H(+). It carries out the reaction N-octanoyl-1-hexadecanoyl-2-(9Z,12Z-octadecadienoyl)-sn-glycero-3-phosphoethanolamine + H2O = N-octanoyl ethanolamine + 1-hexadecanoyl-2-(9Z,12Z-octadecadienoyl)-sn-glycero-3-phosphate + H(+). The enzyme catalyses N-decanoyl-1-hexadecanoyl-2-(9Z,12Z-octadecadienoyl)-sn-glycero-3-phosphoethanolamine + H2O = N-decanoyl ethanolamine + 1-hexadecanoyl-2-(9Z,12Z-octadecadienoyl)-sn-glycero-3-phosphate + H(+). It catalyses the reaction N-dodecanoyl-1,2-di-(9Z-octadecenoyl)-sn-glycero-3-phosphoethanolamine + H2O = N-dodecanoylethanolamine + 1,2-di-(9Z-octadecenoyl)-sn-glycero-3-phosphate + H(+). The catalysed reaction is N-tetradecanoyl-1,2-di-(9Z-octadecenoyl)-sn-glycero-3-phosphoethanolamine + H2O = N-tetradecanoylethanolamine + 1,2-di-(9Z-octadecenoyl)-sn-glycero-3-phosphate + H(+). It carries out the reaction N-hexadecanoyl-1,2-di-(9Z-octadecenoyl)-sn-glycero-3-phosphoethanolamine + H2O = N-hexadecanoylethanolamine + 1,2-di-(9Z-octadecenoyl)-sn-glycero-3-phosphate + H(+). The enzyme catalyses N,1-dihexadecanoyl-2-(9Z,12Z-octadecadienoyl)-sn-glycero-3-phosphoethanolamine + H2O = 1-hexadecanoyl-2-(9Z,12Z-octadecadienoyl)-sn-glycero-3-phosphate + N-hexadecanoylethanolamine + H(+). It catalyses the reaction N-octadecanoyl-1,2-di-(9Z-octadecenoyl)-sn-glycero-3-phosphoethanolamine + H2O = N-octadecanoyl ethanolamine + 1,2-di-(9Z-octadecenoyl)-sn-glycero-3-phosphate + H(+). The catalysed reaction is N,1,2-tri-(9Z-octadecenoyl)-sn-glycero-3-phosphoethanolamine + H2O = N-(9Z-octadecenoyl) ethanolamine + 1,2-di-(9Z-octadecenoyl)-sn-glycero-3-phosphate + H(+). It carries out the reaction N-(5Z,8Z,11Z,14Z-eicosatetraenoyl)-1,2-diacyl-sn-glycero-3-phosphoethanolamine + H2O = N-(5Z,8Z,11Z,14Z-eicosatetraenoyl)-ethanolamine + a 1,2-diacyl-sn-glycero-3-phosphate + H(+). The enzyme catalyses N-(5Z,8Z,11Z,14Z-eicosatetraenoyl)-1,2-di-(9Z-octadecenoyl)-sn-glycero-3-phosphoethanolamine + H2O = N-(5Z,8Z,11Z,14Z-eicosatetraenoyl)-ethanolamine + 1,2-di-(9Z-octadecenoyl)-sn-glycero-3-phosphate + H(+). It catalyses the reaction 1-O-(1Z-octadecenoyl)-2-(9Z-octadecenoyl)-sn-glycero-3-phospho-N-hexadecanoyl-ethanolamine + H2O = 1-O-(1Z-octadecenoyl)-2-(9Z-octadecenoyl)-sn-glycero-3-phosphate + N-hexadecanoylethanolamine + H(+). The catalysed reaction is N,1-diacyl-sn-glycero-3-phosphoethanolamine + H2O = an N-acylethanolamine + a 1-acyl-sn-glycero-3-phosphate + H(+). It carries out the reaction N,1-dihexadecanoyl-sn-glycero-3-phosphoethanolamine + H2O = N-hexadecanoylethanolamine + 1-hexadecanoyl-sn-glycero-3-phosphate + H(+). The enzyme catalyses N-(5Z,8Z,11Z,14Z-eicosatetraenoyl)-1-(9Z-octadecenoyl)-sn-glycero-3-phosphoethanolamine + H2O = N-(5Z,8Z,11Z,14Z-eicosatetraenoyl)-ethanolamine + 1-(9Z-octadecenoyl)-sn-glycero-3-phosphate + H(+). Its activity is regulated as follows. Activated by divalent cations. Activated by bile acids. Activated by membrane phospholipids such as phosphatidylethanolamines. Inhibited by cardiolipins. Functionally, D-type phospholipase that hydrolyzes N-acyl-phosphatidylethanolamines (NAPEs) to produce bioactive N-acylethanolamines/fatty acid ethanolamides (NAEs/FAEs) and phosphatidic acid. Cleaves the terminal phosphodiester bond of diacyl- and alkenylacyl-NAPEs, primarily playing a role in the generation of long-chain saturated and monounsaturated NAEs in the brain. May control NAPE homeostasis in dopaminergic neuron membranes and regulate neuron survival, partly through RAC1 activation. As a regulator of lipid metabolism in the adipose tissue, mediates the crosstalk between adipocytes, gut microbiota and immune cells to control body temperature and weight. In particular, regulates energy homeostasis by promoting cold-induced brown or beige adipocyte differentiation program to generate heat from fatty acids and glucose. Has limited D-type phospholipase activity toward N-acyl lyso-NAPEs. The sequence is that of N-acyl-phosphatidylethanolamine-hydrolyzing phospholipase D (Napepld) from Rattus norvegicus (Rat).